A 568-amino-acid chain; its full sequence is Archaeosine synthase subunit alpha (568 aa).

The region spanning 496–565 (YDALKSYWVK…AKKGVAVKVR (70 aa)) is the PUA domain.

The protein belongs to the archaeosine synthase type 1 family. Forms a robust complex with the archaeosine synthase beta subunit RaSEA, likely an alpha(2)beta(2) heterotetrameric structure. Formation of this complex highly increases lysine transfer activity.

The catalysed reaction is 7-cyano-7-carbaguanosine(15) in tRNA + L-lysine = 7-N-[(5S)-5-amino-5-carboxypentyl]formamidino-7-deazaguanosine(15) in tRNA. The protein operates within tRNA modification; archaeosine-tRNA biosynthesis. In terms of biological role, functions in the biosynthesis of archaeosine, a modified nucleoside present in the dihydrouridine loop (D-loop) of archaeal tRNAs. Catalyzes the addition of L-lysine to the cyano group of 7-cyano-7-deazaguanine (preQ0)-modified tRNAs at position 15, to generate q0kN15-tRNA, a q0N lysine adduct identified as 7-N-[(5S)-5-amino-5-carboxypentyl]formamidino-7-deazaguanosine. This chain is Archaeosine synthase subunit alpha, found in Thermococcus kodakarensis (strain ATCC BAA-918 / JCM 12380 / KOD1) (Pyrococcus kodakaraensis (strain KOD1)).